The primary structure comprises 83 residues: Cytochrome b559 subunit alpha (83 aa).

The helical transmembrane segment at 22–36 (VIHSITIPALFIAGW) threads the bilayer. Residue histidine 24 coordinates heme.

The protein belongs to the PsbE/PsbF family. In terms of assembly, heterodimer of an alpha subunit and a beta subunit. PSII is composed of 1 copy each of membrane proteins PsbA, PsbB, PsbC, PsbD, PsbE, PsbF, PsbH, PsbI, PsbJ, PsbK, PsbL, PsbM, PsbT, PsbX, PsbY, PsbZ, Psb30/Ycf12, peripheral proteins PsbO, CyanoQ (PsbQ), PsbU, PsbV and a large number of cofactors. It forms dimeric complexes. Heme b is required as a cofactor.

It localises to the cellular thylakoid membrane. This b-type cytochrome is tightly associated with the reaction center of photosystem II (PSII). PSII is a light-driven water:plastoquinone oxidoreductase that uses light energy to abstract electrons from H(2)O, generating O(2) and a proton gradient subsequently used for ATP formation. It consists of a core antenna complex that captures photons, and an electron transfer chain that converts photonic excitation into a charge separation. This is Cytochrome b559 subunit alpha from Synechococcus elongatus (strain ATCC 33912 / PCC 7942 / FACHB-805) (Anacystis nidulans R2).